Consider the following 366-residue polypeptide: Mannonate dehydratase (366 aa).

It belongs to the mannonate dehydratase family. Fe(2+) is required as a cofactor. Requires Mn(2+) as cofactor.

The enzyme catalyses D-mannonate = 2-dehydro-3-deoxy-D-gluconate + H2O. It functions in the pathway carbohydrate metabolism; pentose and glucuronate interconversion. Catalyzes the dehydration of D-mannonate. The chain is Mannonate dehydratase from Streptococcus suis (strain 98HAH33).